We begin with the raw amino-acid sequence, 218 residues long: Adenylate kinase (218 aa).

Glycine 10 to threonine 15 serves as a coordination point for ATP. Residues serine 30–valine 59 form an NMP region. AMP is bound by residues threonine 31, arginine 36, glutamine 57 to valine 59, glycine 85 to arginine 88, and glutamine 92. The segment at glycine 122–aspartate 159 is LID. ATP is bound by residues arginine 123 and threonine 132–tyrosine 133. Residues proline 127–glycine 150 are disordered. The AMP site is built by arginine 156 and arginine 167. Position 203 (glycine 203) interacts with ATP.

Belongs to the adenylate kinase family. In terms of assembly, monomer.

It localises to the cytoplasm. It carries out the reaction AMP + ATP = 2 ADP. It participates in purine metabolism; AMP biosynthesis via salvage pathway; AMP from ADP: step 1/1. Its function is as follows. Catalyzes the reversible transfer of the terminal phosphate group between ATP and AMP. Plays an important role in cellular energy homeostasis and in adenine nucleotide metabolism. In Acidovorax ebreus (strain TPSY) (Diaphorobacter sp. (strain TPSY)), this protein is Adenylate kinase.